A 381-amino-acid polypeptide reads, in one-letter code: Sulfite reductase, dissimilatory-type subunit beta (381 aa).

The [4Fe-4S] cluster site is built by Cys151, Cys188, Cys189, Cys193, Cys231, Cys258, Cys261, and Cys264. Cys193 is a siroheme binding site. The 4Fe-4S ferredoxin-type domain maps to 249-276 (NTIAIKNERCMYCGNCYTMCPALPISDG).

In terms of assembly, heterohexamer of two alpha, two beta and two gamma subunits. Requires [4Fe-4S] cluster as cofactor. It depends on siroheme as a cofactor.

The catalysed reaction is [DsrC protein]-trisulfide + NAD(+) + 3 H2O = [DsrC protein]-dithiol + sulfite + NADH + 3 H(+). Its function is as follows. Catalyzes the reduction of sulfite to sulfide. This is the terminal oxidation reaction in sulfate respiration, a process catalyzed by the sulfate-reducing bacteria. This is Sulfite reductase, dissimilatory-type subunit beta (dsvB) from Nitratidesulfovibrio vulgaris (strain ATCC 29579 / DSM 644 / CCUG 34227 / NCIMB 8303 / VKM B-1760 / Hildenborough) (Desulfovibrio vulgaris).